Consider the following 364-residue polypeptide: Uroporphyrinogen decarboxylase (364 aa).

Residues 49 to 53, D98, Y173, S228, and H341 each bind substrate; that span reads RQAGR.

It belongs to the uroporphyrinogen decarboxylase family. As to quaternary structure, homodimer.

It localises to the cytoplasm. It catalyses the reaction uroporphyrinogen III + 4 H(+) = coproporphyrinogen III + 4 CO2. Its pathway is porphyrin-containing compound metabolism; protoporphyrin-IX biosynthesis; coproporphyrinogen-III from 5-aminolevulinate: step 4/4. Catalyzes the decarboxylation of four acetate groups of uroporphyrinogen-III to yield coproporphyrinogen-III. The chain is Uroporphyrinogen decarboxylase from Protochlamydia amoebophila (strain UWE25).